Reading from the N-terminus, the 351-residue chain is Glycerol-3-phosphate dehydrogenase [NAD(P)+] (351 aa).

The NADPH site is built by Ser-12, Trp-13, His-33, and Lys-114. Residues Lys-114, Gly-145, and Ser-147 each coordinate sn-glycerol 3-phosphate. An NADPH-binding site is contributed by Ala-149. Positions 200, 253, 263, 264, and 265 each coordinate sn-glycerol 3-phosphate. The Proton acceptor role is filled by Lys-200. Arg-264 provides a ligand contact to NADPH. Val-288 and Glu-290 together coordinate NADPH.

This sequence belongs to the NAD-dependent glycerol-3-phosphate dehydrogenase family.

It is found in the cytoplasm. It catalyses the reaction sn-glycerol 3-phosphate + NAD(+) = dihydroxyacetone phosphate + NADH + H(+). It carries out the reaction sn-glycerol 3-phosphate + NADP(+) = dihydroxyacetone phosphate + NADPH + H(+). It functions in the pathway membrane lipid metabolism; glycerophospholipid metabolism. Functionally, catalyzes the reduction of the glycolytic intermediate dihydroxyacetone phosphate (DHAP) to sn-glycerol 3-phosphate (G3P), the key precursor for phospholipid synthesis. The polypeptide is Glycerol-3-phosphate dehydrogenase [NAD(P)+] (Lacticaseibacillus paracasei (strain ATCC 334 / BCRC 17002 / CCUG 31169 / CIP 107868 / KCTC 3260 / NRRL B-441) (Lactobacillus paracasei)).